The chain runs to 96 residues: MKIRPLHDRVLVKRQEVESKSAGGIVLTGSAAGKSTRGTVTAIGKGRVLDNGQIKPLDVKVGDTVIFNEGYGAKTEKINTEELLLLTESDILAIVE.

It belongs to the GroES chaperonin family. In terms of assembly, heptamer of 7 subunits arranged in a ring. Interacts with the chaperonin GroEL.

Its subcellular location is the cytoplasm. Together with the chaperonin GroEL, plays an essential role in assisting protein folding. The GroEL-GroES system forms a nano-cage that allows encapsulation of the non-native substrate proteins and provides a physical environment optimized to promote and accelerate protein folding. GroES binds to the apical surface of the GroEL ring, thereby capping the opening of the GroEL channel. This Buchnera aphidicola subsp. Myzus persicae (Myzus persicae primary endosymbiont) protein is Co-chaperonin GroES.